Reading from the N-terminus, the 1896-residue chain is MAVPLERAFASVTQSFHKDATQGPTTNEYLVARAETQRYAPYAVRKGPAALLAQVGINTIHDSPLSHSHPACYALNAFHFLKVIPRYLHGKAEVWGTKDNWFRKLQAQIDSQTTTLTHRNYAITARDHVRYPGTVVDHPGSCTAGTLFMHDALQYMTPLDVYTLFATSPEMHSLVATAVIPPESVDRLPAFWPELYQLAYYEDHLCYAPDGNFADAYNQPLAAHQWMTMKSLHGPDFTLSVDVPASRYSHHIFVISKRPGLPDTHRDFMCPDLVELPKDFFPGANKADKLLPRTLVNQMVEYAASVKRATIKDATSRTRAYVKDQKYAAVTPVQQMYLSWFGSGLSQMQFPDRPVTPLDNFATALWYRLLPSRLYRLPATIRNFQLKAFVDQLRTPQYLLHFKLDEYHLSSNDKYSDFYRNESRQASSKDMLSAFEAICFGGAPELEKKILGNNNPAPFATVPNPPSQTALGLATITAAIAFILPNRAARLTRLVARYAIRAVKEIVNPSFLTIPRFGLLSHSIASWLQTDGAVITYGLAPKIASWSAPIWYNAALLAPTDMRSCQVLVDIANDLRFDYRYGTMRLAVTLGLTLLNPFLRRLVLLPFKVLWHSYLPSIKNKLDSMVLMSISTLPDNISVPLLTLRGNLNRQRCPDNKDPTPIHESDDNSTADDKCLHCPIHCLKSKLSEPAASPDTVPEDNPLQEGDLTEEVYAAALAKKDTPPPYPTRNDCLLVALADGLLTKRILWFSCIKMFGNTACWVIHDTGKAFDWMHLKMLAEQLKLNVSIEVAAEHDHHWTGLAKRVGPIDGRKIALRWYPYHWELSDRGREDYGPPPPPPPPSTTEPPPPPNPPAASPYHSPTVEDEPLEEIPLANSNGEFSTFAFDDMAADDLNPAQPLSSLDLDEEPSAKQEPLEPAAIKTSEPEPLVPESEEVFFRPSPTPTPSDATPTPAARAPSSVSNENAQRPRHPLPPVPTGGASAPSNDKLNSAAKQYARLVAGKTRQMTVAQPRSKAYLRDLKRGNIGTIPTAEAEQLDAYIDSWAVNGFNRSVHVIYFCGLPGTGKSRRCMKMTERLLKENKYLAQTVRIVTPTDNLRNSVARQLKPPTESSYSVQTYETPIRQPSLGPVLIVDEYGKMPAGWLETVLFLNPRVQMVIFTADPTQGIFRTRIPDAYCCRIPSSTEAIASYAHEYRRVSDRPAPGVARALGLPTTSRRPGQIETSTELNVDWITVRPEGERAAWHNTWGGKVYTYATCQGETFHRAYQMVINGNTRFWDDRDLFAALTRGSGTLRLIYETQSSKPLPRSTSKLYNALLDFRTDPHKLPLAIEEHVNRYIPSHLRNVNQAVPRRNAASNPDALPSQRILPGGQSTTAEPXQSQASALPTGGEAIDVPALDRQDPQRFPQLKVLPHLCGYIGDYSEASYPEPEHPKTQMLDATFPTYLARNRGWNDPALTDAVTANYKAPEHRDIWVEAVGETTRQVHGSGDDRDVFLEHRGDDKATANITYAKRLRFSQRAANERSIAATKVAGSELFEAFTRAIPLPQETFNDSLLEECRTENDTVHLTSKPLATLINNAERSDPSWSLNMIKLFIKGQTVKKLEKMGSDATAGQSIASFRAEVLLAWGPYARYIDRRIRALLPPHVYIHSRRTNEDFEKFVAAHWDHTRESTDGDYTAYDASQDATFVNFETLLMRRLDFPLDIIEAYVEMKASITSHFGPLAIMRFSGEVWTYLFNTLGNIAFTYAKYEVPSVAQVYGGDDKSINSPITVRTGWSQLVGKFNLVEKPVVGYEPTFCGWRIVPGGIVKDPQLLFWRTRYARIRYDAALWAPGYYDELVLSLKTSDRLMDHMSPNDLAYLQALVRFYTKLSRRLPSLADRRRCNPLPADSPSVVLSRD.

Positions 60 to 227 (IHDSPLSHSH…NQPLAAHQWM (168 aa)) constitute an Alphavirus-like MT domain. Disordered regions lie at residues 828–866 (GRED…VEDE) and 891–987 (DDLN…SNDK). A compositionally biased stretch (pro residues) spans 833 to 855 (GPPPPPPPPSTTEPPPPPNPPAA). A compositionally biased stretch (low complexity) spans 945 to 959 (PSDATPTPAARAPSS). Residues 996–1003 (ARLVAGKT) and 1059–1066 (GLPGTGKS) contribute to the ATP site. The (+)RNA virus helicase ATP-binding domain occupies 1025–1194 (IGTIPTAEAE…AIASYAHEYR (170 aa)). The (+)RNA virus helicase C-terminal domain maps to 1195-1327 (RVSDRPAPGV…FRTDPHKLPL (133 aa)). The segment at 1347-1385 (AVPRRNAASNPDALPSQRILPGGQSTTAEPXQSQASALP) is disordered. Positions 1369-1383 (GQSTTAEPXQSQASA) are enriched in polar residues. The region spanning 1668 to 1774 (RESTDGDYTA…NSPITVRTGW (107 aa)) is the RdRp catalytic domain.

The catalysed reaction is ATP + H2O = ADP + phosphate + H(+). It catalyses the reaction RNA(n) + a ribonucleoside 5'-triphosphate = RNA(n+1) + diphosphate. RNA replication protein replicates the viral genomic RNA. The central part of this protein possibly functions as an ATP-binding helicase and/or methyltransferase. This Botrytis virus F (isolate Botrytis cinerea/New Zealand/Howitt/2001) (BotV-F) protein is RNA replication protein.